We begin with the raw amino-acid sequence, 371 residues long: MSAVEKLPEDFCANPDVAWTFPKVFYTSSQVFEHEKEAIFAKSWICVAHSSELAQPNDYITRKVIGENIVIIRGKDSVLRAFYNVCPHRGHELLSGSGKAKNVITCPYHAWTFKLDGSLALARNCDHVESFDKENSSMVPLKVEEYAGFLFINMDENATCVEDQLPGFAERLNQACGVIKDLKLAARFVTETPANWKVIVDNYMECYHCGPAHPGFADSVQVDKYWHTTHQNWTLQYGFARSSEKSFKLDPSVTDPEFHGFWTWPCTMFNVPPGSNFMTVIYEFPVDAETTLQHYDIYFTNEELTQDQKDLIEWYRNVFRPEDLNLVESVQRGLKSRGYRGQGRIMTDKQRSGISEHGIAYFQHLVAQYHQ.

In terms of domain architecture, Rieske spans 44–152; that stretch reads WICVAHSSEL…VEEYAGFLFI (109 aa). Residues Cys-86, His-88, Cys-106, and His-109 each contribute to the [2Fe-2S] cluster site. Fe cation is bound by residues His-208, His-213, and Asp-323.

It belongs to the bacterial ring-hydroxylating dioxygenase alpha subunit family. CntA subfamily. As to quaternary structure, composed of an oxygenase subunit (cntA) and a reductase subunit (cntB). The cofactor is [2Fe-2S] cluster. It depends on Fe cation as a cofactor.

The catalysed reaction is (R)-carnitine + NADH + O2 + H(+) = (3R)-3-hydroxy-4-oxobutanoate + trimethylamine + NAD(+) + H2O. It carries out the reaction (R)-carnitine + NADPH + O2 + H(+) = (3R)-3-hydroxy-4-oxobutanoate + trimethylamine + NADP(+) + H2O. It functions in the pathway amine and polyamine metabolism; carnitine metabolism. Converts carnitine to trimethylamine and malic semialdehyde. In Acinetobacter baumannii (strain ATCC 19606 / DSM 30007 / JCM 6841 / CCUG 19606 / CIP 70.34 / NBRC 109757 / NCIMB 12457 / NCTC 12156 / 81), this protein is Carnitine monooxygenase oxygenase subunit.